A 354-amino-acid chain; its full sequence is Photosystem II protein D1 1 (354 aa).

The next 3 helical transmembrane spans lie at 29–46 (YIGW…TATT), 118–133 (HFLI…EWEL), and 142–156 (WIAV…AATA). His118 lines the chlorophyll a pocket. Residue Tyr126 coordinates pheophytin a. Positions 170 and 189 each coordinate [CaMn4O5] cluster. Residues 197–218 (FHQLGVAGVFGGALFSAMHGSL) form a helical membrane-spanning segment. His198 lines the chlorophyll a pocket. A quinone is bound by residues His215 and 264 to 265 (SF). Residue His215 coordinates Fe cation. His272 contacts Fe cation. Residues 274–288 (FLAAWPVIGIWFTAL) traverse the membrane as a helical segment. Positions 332, 333, 342, and 344 each coordinate [CaMn4O5] cluster. A propeptide spanning residues 345-354 (AVEVAPAIRG) is cleaved from the precursor.

Belongs to the reaction center PufL/M/PsbA/D family. In terms of assembly, PSII is composed of 1 copy each of membrane proteins PsbA, PsbB, PsbC, PsbD, PsbE, PsbF, PsbH, PsbI, PsbJ, PsbK, PsbL, PsbM, PsbT, PsbX, PsbY, PsbZ, Psb30/Ycf12, peripheral proteins PsbO, CyanoQ (PsbQ), PsbU, PsbV and a large number of cofactors. It forms dimeric complexes. The cofactor is The D1/D2 heterodimer binds P680, chlorophylls that are the primary electron donor of PSII, and subsequent electron acceptors. It shares a non-heme iron and each subunit binds pheophytin, quinone, additional chlorophylls, carotenoids and lipids. D1 provides most of the ligands for the Mn4-Ca-O5 cluster of the oxygen-evolving complex (OEC). There is also a Cl(-1) ion associated with D1 and D2, which is required for oxygen evolution. The PSII complex binds additional chlorophylls, carotenoids and specific lipids.. Post-translationally, tyr-161 forms a radical intermediate that is referred to as redox-active TyrZ, YZ or Y-Z. In terms of processing, C-terminally processed by CtpA; processing is essential to allow assembly of the oxygen-evolving complex and thus photosynthetic growth.

The protein localises to the cellular thylakoid membrane. The enzyme catalyses 2 a plastoquinone + 4 hnu + 2 H2O = 2 a plastoquinol + O2. In terms of biological role, photosystem II (PSII) is a light-driven water:plastoquinone oxidoreductase that uses light energy to abstract electrons from H(2)O, generating O(2) and a proton gradient subsequently used for ATP formation. It consists of a core antenna complex that captures photons, and an electron transfer chain that converts photonic excitation into a charge separation. The D1/D2 (PsbA/PsbD) reaction center heterodimer binds P680, the primary electron donor of PSII as well as several subsequent electron acceptors. This chain is Photosystem II protein D1 1, found in Synechococcus sp. (strain JA-3-3Ab) (Cyanobacteria bacterium Yellowstone A-Prime).